The sequence spans 222 residues: Peptide methionine sulfoxide reductase MsrA (222 aa).

Residue Cys60 is part of the active site.

Belongs to the MsrA Met sulfoxide reductase family.

The enzyme catalyses L-methionyl-[protein] + [thioredoxin]-disulfide + H2O = L-methionyl-(S)-S-oxide-[protein] + [thioredoxin]-dithiol. It carries out the reaction [thioredoxin]-disulfide + L-methionine + H2O = L-methionine (S)-S-oxide + [thioredoxin]-dithiol. Its function is as follows. Has an important function as a repair enzyme for proteins that have been inactivated by oxidation. Catalyzes the reversible oxidation-reduction of methionine sulfoxide in proteins to methionine. This is Peptide methionine sulfoxide reductase MsrA from Pseudomonas putida (strain W619).